Consider the following 118-residue polypeptide: Ribonuclease P protein component (118 aa).

Belongs to the RnpA family. As to quaternary structure, consists of a catalytic RNA component (M1 or rnpB) and a protein subunit.

The enzyme catalyses Endonucleolytic cleavage of RNA, removing 5'-extranucleotides from tRNA precursor.. RNaseP catalyzes the removal of the 5'-leader sequence from pre-tRNA to produce the mature 5'-terminus. It can also cleave other RNA substrates such as 4.5S RNA. The protein component plays an auxiliary but essential role in vivo by binding to the 5'-leader sequence and broadening the substrate specificity of the ribozyme. The chain is Ribonuclease P protein component from Shewanella oneidensis (strain ATCC 700550 / JCM 31522 / CIP 106686 / LMG 19005 / NCIMB 14063 / MR-1).